The primary structure comprises 266 residues: Vitamin B12-binding protein (266 aa).

The signal sequence occupies residues 1 to 22 (MAKSLFRALVALSFLAPLWLNA). The 242-residue stretch at 25-266 (RVITLSPANT…QLCNALSQVD (242 aa)) folds into the Fe/B12 periplasmic-binding domain. Residues Tyr-50 and 242–246 (DWFER) each bind cyanocob(III)alamin. Cysteines 183 and 259 form a disulfide.

It belongs to the BtuF family. As to quaternary structure, the complex is composed of two ATP-binding proteins (BtuD), two transmembrane proteins (BtuC) and a solute-binding protein (BtuF).

It localises to the periplasm. In terms of biological role, part of the ABC transporter complex BtuCDF involved in vitamin B12 import. Binds vitamin B12 and delivers it to the periplasmic surface of BtuC. This is Vitamin B12-binding protein (btuF) from Escherichia coli (strain K12).